The following is a 306-amino-acid chain: Small ribosomal subunit biogenesis GTPase RsgA (306 aa).

One can recognise a CP-type G domain in the interval 77 to 236 (KNELKRPNVA…IVDTPGFSKL (160 aa)). GTP is bound by residues 126–129 (SKID) and 179–187 (GQTGVGKST). Zn(2+)-binding residues include Cys-260, Cys-266, His-268, and Cys-274.

This sequence belongs to the TRAFAC class YlqF/YawG GTPase family. RsgA subfamily. Monomer. Associates with 30S ribosomal subunit, binds 16S rRNA. The cofactor is Zn(2+).

It is found in the cytoplasm. Its function is as follows. One of several proteins that assist in the late maturation steps of the functional core of the 30S ribosomal subunit. Helps release RbfA from mature subunits. May play a role in the assembly of ribosomal proteins into the subunit. Circularly permuted GTPase that catalyzes slow GTP hydrolysis, GTPase activity is stimulated by the 30S ribosomal subunit. This chain is Small ribosomal subunit biogenesis GTPase RsgA, found in Onion yellows phytoplasma (strain OY-M).